The chain runs to 329 residues: Ephrin-B1 (329 aa).

A signal peptide spans 1–20 (MEGLRRLLGLLLVLYRLCSA). Topologically, residues 21 to 226 (LGKNLEPVTW…FFNSKIAVFA (206 aa)) are extracellular. An Ephrin RBD domain is found at 23–157 (KNLEPVTWNS…TRSMKIIMKV (135 aa)). 2 disulfides stabilise this stretch: C57-C94 and C82-C146. N-linked (GlcNAc...) asparagine glycosylation occurs at N132. The segment at 163 to 192 (AVPPEQLTTTRPSKEADNTGKIATFGPWNG) is disordered. The N-linked (GlcNAc...) asparagine glycan is linked to N203. Residues 227-247 (AIGAGCVIFILIIIFLVVLLI) form a helical membrane-spanning segment. The Cytoplasmic portion of the chain corresponds to 248-329 (KIRKRHRKHT…QSPANIYYKV (82 aa)). A PDZ-binding motif is present at residues 327–329 (YKV).

It belongs to the ephrin family. In terms of assembly, interacts with TLE4 through the PDZ-binding motif. In terms of processing, inducible phosphorylation of tyrosine residues in the cytoplasmic domain. Tyrosine phosphorylation inhibits TLE4-binding. As to expression, expressed at low levels in most tissues with highest levels in the kidney, oocytes, ovary and testis.

It localises to the membrane. Cell surface transmembrane ligand for Eph receptors, a family of receptor tyrosine kinases which are crucial for migration, repulsion and adhesion during neuronal, vascular and epithelial development. Binds promiscuously Eph receptors residing on adjacent cells, leading to contact-dependent bidirectional signaling into neighboring cells. The signaling pathway downstream of the receptor is referred to as forward signaling while the signaling pathway downstream of the ephrin ligand is referred to as reverse signaling. May have a role in the developing mesenchymal and nervous tissue. This Xenopus laevis (African clawed frog) protein is Ephrin-B1 (efnb1).